Here is a 317-residue protein sequence, read N- to C-terminus: MKI67 FHA domain-interacting nucleolar phosphoprotein (317 aa).

Ala-2 carries the N-acetylalanine modification. Lys-40 is covalently cross-linked (Glycyl lysine isopeptide (Lys-Gly) (interchain with G-Cter in SUMO2)). The 79-residue stretch at 47–125 folds into the RRM domain; sequence GVVYLGHLPS…RLLSCKFMPR (79 aa). Arg-116 is subject to Omega-N-methylarginine. Residues Lys-181 and Lys-194 each participate in a glycyl lysine isopeptide (Lys-Gly) (interchain with G-Cter in SUMO2) cross-link. Arg-203 is subject to Citrulline. The disordered stretch occupies residues 203-317; the sequence is RDSEGNQVLP…KRPRKRKSKQ (115 aa). Residues 213-233 are compositionally biased toward basic and acidic residues; the sequence is DQKEGLSGEPRRKEKMMKEDI. A Phosphoserine modification is found at Ser-219. Basic residues predominate over residues 238-248; it reads PKKRKRSRRKK. Position 253 is a phosphoserine (Ser-253). Residues Thr-257 and Thr-261 each carry the phosphothreonine modification. Residues 265-284 are compositionally biased toward basic and acidic residues; sequence LERRKSQVMEVGGDKDDEII. 2 positions are modified to omega-N-methylated arginine: Arg-267 and Arg-268. Ser-270 bears the Phosphoserine mark. A Glycyl lysine isopeptide (Lys-Gly) (interchain with G-Cter in SUMO1); alternate cross-link involves residue Lys-293. Residue Lys-293 forms a Glycyl lysine isopeptide (Lys-Gly) (interchain with G-Cter in SUMO2); alternate linkage. At Thr-301 the chain carries Phosphothreonine. Basic residues predominate over residues 308 to 317; the sequence is KRPRKRKSKQ.

Binds to the FHA domain of MKI67; this interaction is enhanced in mitosis. Post-translationally, phosphorylated. In terms of processing, citrullinated by PADI4. In terms of tissue distribution, expressed in brain, heart, hind limb muscles, intestine, liver, skin and spleen.

The protein resides in the nucleus. Its subcellular location is the nucleolus. The protein localises to the chromosome. This chain is MKI67 FHA domain-interacting nucleolar phosphoprotein (Nifk), found in Mus musculus (Mouse).